Here is a 376-residue protein sequence, read N- to C-terminus: Succinyl-diaminopimelate desuccinylase (376 aa).

H66 provides a ligand contact to Zn(2+). Residue D68 is part of the active site. Position 99 (D99) interacts with Zn(2+). E133 (proton acceptor) is an active-site residue. Zn(2+) contacts are provided by E134, E162, and H349.

The protein belongs to the peptidase M20A family. DapE subfamily. Homodimer. Zn(2+) serves as cofactor. Requires Co(2+) as cofactor.

The catalysed reaction is N-succinyl-(2S,6S)-2,6-diaminopimelate + H2O = (2S,6S)-2,6-diaminopimelate + succinate. Its pathway is amino-acid biosynthesis; L-lysine biosynthesis via DAP pathway; LL-2,6-diaminopimelate from (S)-tetrahydrodipicolinate (succinylase route): step 3/3. Catalyzes the hydrolysis of N-succinyl-L,L-diaminopimelic acid (SDAP), forming succinate and LL-2,6-diaminopimelate (DAP), an intermediate involved in the bacterial biosynthesis of lysine and meso-diaminopimelic acid, an essential component of bacterial cell walls. This is Succinyl-diaminopimelate desuccinylase from Vesicomyosocius okutanii subsp. Calyptogena okutanii (strain HA).